A 518-amino-acid chain; its full sequence is MKKLKINYLFIGILALLLAVALWPSIPWFGKADNRIAAIQARGELRVSTIHTPLTYNEINGKPFGLDYELAKQFADYLGVKLKVTVRQNISQLFDDLDNGNADLLAAGLVYNSERVKNYQPGPTYYSVSQQLVYKVGQYRPRTLGNLTAEQLTVAPGHVVVNDLQTLKETKFPELSWKVDDKKGSAELMEDVIEGKLDYTIADSVAISLFQRVHPELAVALDITDEQPVTWFRPLDGDNTLSAALLDFFNEMNEDGTLARIEEKYLGHGDDFDYVDTRTFLRAVDTVLPQLKPLFEKYAEEIDWRLLAAIAYQESHWDAQATSPTGVRGMMMLTKNTAQSLGITDRTDAEQSIRGGVRYLQDMMSKVPESVPENERIWFALAAYNMGYAHMLDARALTAKTKGNPDSWADVKQRLPLLSQKPYYSKLTYGYARGHEAYAYVENIRKYQISLVGYLQEKEKQATEATMQLAQDYPAVSPTELGKEKFPFLSFLSQSSSNYLTHSPSLLFSRKGSEEKQN.

Positions 1 to 21 are cleaved as a signal peptide; that stretch reads MKKLKINYLFIGILALLLAVA. The non-LT domain stretch occupies residues 22-269; it reads LWPSIPWFGK…RIEEKYLGHG (248 aa). Residues 270 to 518 are LT domain; it reads DDFDYVDTRT…SRKGSEEKQN (249 aa). The active site involves Glu-314.

It in the N-terminal section; belongs to the bacterial solute-binding protein 3 family. The protein in the C-terminal section; belongs to the transglycosylase Slt family.

The protein resides in the cell outer membrane. The enzyme catalyses Exolytic cleavage of the (1-&gt;4)-beta-glycosidic linkage between N-acetylmuramic acid (MurNAc) and N-acetylglucosamine (GlcNAc) residues in peptidoglycan, from either the reducing or the non-reducing ends of the peptidoglycan chains, with concomitant formation of a 1,6-anhydrobond in the MurNAc residue.. In terms of biological role, murein-degrading enzyme that degrades murein glycan strands and insoluble, high-molecular weight murein sacculi, with the concomitant formation of a 1,6-anhydromuramoyl product. Lytic transglycosylases (LTs) play an integral role in the metabolism of the peptidoglycan (PG) sacculus. Their lytic action creates space within the PG sacculus to allow for its expansion as well as for the insertion of various structures such as secretion systems and flagella. The protein is Membrane-bound lytic murein transglycosylase F of Shigella dysenteriae serotype 1 (strain Sd197).